Reading from the N-terminus, the 295-residue chain is 4-hydroxy-tetrahydrodipicolinate synthase (295 aa).

T47 is a binding site for pyruvate. Y135 functions as the Proton donor/acceptor in the catalytic mechanism. Residue K163 is the Schiff-base intermediate with substrate of the active site. I204 contributes to the pyruvate binding site.

It belongs to the DapA family. Homotetramer; dimer of dimers.

It localises to the cytoplasm. It carries out the reaction L-aspartate 4-semialdehyde + pyruvate = (2S,4S)-4-hydroxy-2,3,4,5-tetrahydrodipicolinate + H2O + H(+). It functions in the pathway amino-acid biosynthesis; L-lysine biosynthesis via DAP pathway; (S)-tetrahydrodipicolinate from L-aspartate: step 3/4. Catalyzes the condensation of (S)-aspartate-beta-semialdehyde [(S)-ASA] and pyruvate to 4-hydroxy-tetrahydrodipicolinate (HTPA). This chain is 4-hydroxy-tetrahydrodipicolinate synthase, found in Caldicellulosiruptor bescii (strain ATCC BAA-1888 / DSM 6725 / KCTC 15123 / Z-1320) (Anaerocellum thermophilum).